Reading from the N-terminus, the 340-residue chain is Glyceraldehyde-3-phosphate dehydrogenase (340 aa).

Residues Ser-11–Ile-12 and Gly-111 each bind NAD(+). Ser-140 to Asn-142 is a D-glyceraldehyde 3-phosphate binding site. The active-site Nucleophile is Cys-141. Arg-169 is an NAD(+) binding site. His-195–Gly-196 lines the D-glyceraldehyde 3-phosphate pocket. Gln-303 contributes to the NAD(+) binding site.

Belongs to the glyceraldehyde-3-phosphate dehydrogenase family. In terms of assembly, homotetramer.

The protein localises to the cytoplasm. It carries out the reaction D-glyceraldehyde 3-phosphate + phosphate + NADP(+) = (2R)-3-phospho-glyceroyl phosphate + NADPH + H(+). The enzyme catalyses D-glyceraldehyde 3-phosphate + phosphate + NAD(+) = (2R)-3-phospho-glyceroyl phosphate + NADH + H(+). It participates in carbohydrate degradation; glycolysis; pyruvate from D-glyceraldehyde 3-phosphate: step 1/5. The protein is Glyceraldehyde-3-phosphate dehydrogenase of Methanococcus maripaludis (strain C5 / ATCC BAA-1333).